Reading from the N-terminus, the 132-residue chain is Ribonuclease P protein component 2 (132 aa).

The protein belongs to the eukaryotic/archaeal RNase P protein component 2 family. As to quaternary structure, consists of a catalytic RNA component and at least 4-5 protein subunits.

The protein localises to the cytoplasm. The enzyme catalyses Endonucleolytic cleavage of RNA, removing 5'-extranucleotides from tRNA precursor.. In terms of biological role, part of ribonuclease P, a protein complex that generates mature tRNA molecules by cleaving their 5'-ends. The sequence is that of Ribonuclease P protein component 2 from Methanosarcina acetivorans (strain ATCC 35395 / DSM 2834 / JCM 12185 / C2A).